Here is a 356-residue protein sequence, read N- to C-terminus: Histidinol-phosphate aminotransferase 1 (356 aa).

Position 213 is an N6-(pyridoxal phosphate)lysine (Lys-213).

The protein belongs to the class-II pyridoxal-phosphate-dependent aminotransferase family. Histidinol-phosphate aminotransferase subfamily. In terms of assembly, homodimer. Pyridoxal 5'-phosphate serves as cofactor.

It catalyses the reaction L-histidinol phosphate + 2-oxoglutarate = 3-(imidazol-4-yl)-2-oxopropyl phosphate + L-glutamate. The protein operates within amino-acid biosynthesis; L-histidine biosynthesis; L-histidine from 5-phospho-alpha-D-ribose 1-diphosphate: step 7/9. The chain is Histidinol-phosphate aminotransferase 1 (hisC1) from Bordetella parapertussis (strain 12822 / ATCC BAA-587 / NCTC 13253).